The chain runs to 265 residues: Triosephosphate isomerase (265 aa).

N13–K15 contributes to the substrate binding site. H106 acts as the Electrophile in catalysis. E179 serves as the catalytic Proton acceptor. Substrate is bound by residues G185, S223, and G244–G245.

The protein belongs to the triosephosphate isomerase family. As to quaternary structure, homodimer.

It is found in the cytoplasm. The catalysed reaction is D-glyceraldehyde 3-phosphate = dihydroxyacetone phosphate. The protein operates within carbohydrate biosynthesis; gluconeogenesis. It functions in the pathway carbohydrate degradation; glycolysis; D-glyceraldehyde 3-phosphate from glycerone phosphate: step 1/1. Functionally, involved in the gluconeogenesis. Catalyzes stereospecifically the conversion of dihydroxyacetone phosphate (DHAP) to D-glyceraldehyde-3-phosphate (G3P). The protein is Triosephosphate isomerase of Acinetobacter baylyi (strain ATCC 33305 / BD413 / ADP1).